A 641-amino-acid chain; its full sequence is Bifunctional protein glk (641 aa).

The tract at residues 1–21 is disordered; it reads MSTGAQTKAAEASQHADGPRL. Residues 1 to 340 form a glucokinase region; the sequence is MSTGAQTKAA…QLSNRTGGAS (340 aa). ATP is bound at residue 23 to 28; it reads ADVGGT. Residues 341–417 form the HTH rpiR-type domain; it reads SAVFERIRQM…LKLATGLTGT (77 aa). The segment at 341-641 is putative HTH-type transcriptional regulator; the sequence is SAVFERIRQM…SHGAAPAAKE (301 aa). Positions 377-396 form a DNA-binding region, H-T-H motif; sequence IVDIARKADVSQPTVIRFCR. Positions 461-600 constitute an SIS domain; that stretch reads AIDILNNARR…AVGVAIRRAS (140 aa). Residues 576–596 traverse the membrane as a helical segment; sequence SMISRILHLVMIDILAVGVAI.

It in the N-terminal section; belongs to the bacterial glucokinase family.

Its subcellular location is the membrane. The catalysed reaction is D-glucose + ATP = D-glucose 6-phosphate + ADP + H(+). This is Bifunctional protein glk (glk) from Burkholderia thailandensis (strain ATCC 700388 / DSM 13276 / CCUG 48851 / CIP 106301 / E264).